Here is an 88-residue protein sequence, read N- to C-terminus: Small ribosomal subunit protein bS20 (88 aa).

The protein belongs to the bacterial ribosomal protein bS20 family.

Its function is as follows. Binds directly to 16S ribosomal RNA. This is Small ribosomal subunit protein bS20 from Renibacterium salmoninarum (strain ATCC 33209 / DSM 20767 / JCM 11484 / NBRC 15589 / NCIMB 2235).